Here is a 94-residue protein sequence, read N- to C-terminus: Large ribosomal subunit protein bL27 (94 aa).

The propeptide occupies 1 to 9; sequence MLRLDLQFF.

Belongs to the bacterial ribosomal protein bL27 family. Post-translationally, the N-terminus is cleaved by ribosomal processing cysteine protease Prp.

This chain is Large ribosomal subunit protein bL27, found in Bacillus velezensis (strain DSM 23117 / BGSC 10A6 / LMG 26770 / FZB42) (Bacillus amyloliquefaciens subsp. plantarum).